Here is a 497-residue protein sequence, read N- to C-terminus: Protein nucleotidyltransferase YdiU (497 aa).

8 residues coordinate ATP: Gly-88, Gly-90, Arg-91, Lys-110, Asp-122, Gly-123, Arg-173, and Arg-180. Catalysis depends on Asp-249, which acts as the Proton acceptor. Mg(2+)-binding residues include Asn-250 and Asp-259. Asp-259 is an ATP binding site. Residues 477–497 (FARYAEPPEGGGRGYRTFCGT) are disordered.

This sequence belongs to the SELO family. It depends on Mg(2+) as a cofactor. Mn(2+) is required as a cofactor.

The enzyme catalyses L-seryl-[protein] + ATP = 3-O-(5'-adenylyl)-L-seryl-[protein] + diphosphate. The catalysed reaction is L-threonyl-[protein] + ATP = 3-O-(5'-adenylyl)-L-threonyl-[protein] + diphosphate. It carries out the reaction L-tyrosyl-[protein] + ATP = O-(5'-adenylyl)-L-tyrosyl-[protein] + diphosphate. It catalyses the reaction L-histidyl-[protein] + UTP = N(tele)-(5'-uridylyl)-L-histidyl-[protein] + diphosphate. The enzyme catalyses L-seryl-[protein] + UTP = O-(5'-uridylyl)-L-seryl-[protein] + diphosphate. The catalysed reaction is L-tyrosyl-[protein] + UTP = O-(5'-uridylyl)-L-tyrosyl-[protein] + diphosphate. Functionally, nucleotidyltransferase involved in the post-translational modification of proteins. It can catalyze the addition of adenosine monophosphate (AMP) or uridine monophosphate (UMP) to a protein, resulting in modifications known as AMPylation and UMPylation. In Methylorubrum extorquens (strain PA1) (Methylobacterium extorquens), this protein is Protein nucleotidyltransferase YdiU.